A 601-amino-acid chain; its full sequence is Putative ankyrin repeat protein R841 (601 aa).

ANK repeat units lie at residues 17–50 (NNITSLMLAVSNYEIHDNYDTVKSLIDCGFDVNA), 54–86 (HGKSVLMYAINIDSDKNINVIKLLIDHGADVNH), 91–123 (QRSVLIHTCMYMEYGYNNKTISLLIDKGANINY), 165–197 (RENILMRIIKKLDNKYSITTIKLLLEHGINIDH), 201–234 (YGQTALMYACIYINGLKNIPIIKLLLEYGANINS), 238–269 (KGWSPLMSVFKNDIIDIKTIKFLVEKGAEINS), 274–310 (NETMLYVFCKKLSTRIYGQACVKIFDFLIKKGISIDN), 314–349 (KGYTPLMAFIIKISEYNEYTEKFIKLLLDYGANINS), 361–390 (VCCDVVSGSVSHCKIEIINTLIKYGADVNS), 397–427 (TILMNLRYSIHSENYITVLEILLRNGANPNI), 432–463 (YHKFPLLIDILNRGGELRIIKLMLQYNIDPNI), and 467–500 (IGNNALLFVAKHYKKNERFSFLKLLLTYGASYNC).

The polypeptide is Putative ankyrin repeat protein R841 (Acanthamoeba polyphaga mimivirus (APMV)).